The sequence spans 366 residues: UPF0329 protein ECU01_0130/ECU01_1480/ECU08_0060 (366 aa).

Residues 325–366 form a disordered region; that stretch reads IRKEEKRIRKEEERAKNEEELLRMVESEEGKSGEGEEGCRRG.

This sequence belongs to the UPF0329 family.

The chain is UPF0329 protein ECU01_0130/ECU01_1480/ECU08_0060 from Encephalitozoon cuniculi (strain GB-M1) (Microsporidian parasite).